An 842-amino-acid chain; its full sequence is Molybdenum cofactor sulfurase (842 aa).

K236 bears the N6-(pyridoxal phosphate)lysine mark. The active site involves C402. The interval 637–680 (PGSQHGDAQRSSKARLQKHQITTDQESDVQEVHPGSGTTTDSTW) is disordered. An MOSC domain is found at 663–831 (SDVQEVHPGS…AARGDVAYPT (169 aa)).

Belongs to the class-V pyridoxal-phosphate-dependent aminotransferase family. MOCOS subfamily. Pyridoxal 5'-phosphate serves as cofactor.

It catalyses the reaction Mo-molybdopterin + L-cysteine + AH2 = thio-Mo-molybdopterin + L-alanine + A + H2O. Its pathway is cofactor biosynthesis; molybdopterin biosynthesis. Sulfurates the molybdenum cofactor. Sulfation of molybdenum is essential for xanthine dehydrogenase (XDH) and aldehyde oxidase (ADO) enzymes in which molybdenum cofactor is liganded by 1 oxygen and 1 sulfur atom in active form. This Pyricularia oryzae (strain 70-15 / ATCC MYA-4617 / FGSC 8958) (Rice blast fungus) protein is Molybdenum cofactor sulfurase.